The sequence spans 349 residues: Small ribosomal subunit protein uS2 (349 aa).

It belongs to the universal ribosomal protein uS2 family.

In Methylobacterium nodulans (strain LMG 21967 / CNCM I-2342 / ORS 2060), this protein is Small ribosomal subunit protein uS2.